The sequence spans 3790 residues: Transcription-associated protein 1 (3790 aa).

HEAT repeat units follow at residues 98 to 136 (RQHV…HFRP), 335 to 381 (TDLR…HVRQ), 740 to 778 (DLLY…ELCL), 1185 to 1223 (AKAT…IQSK), 1332 to 1370 (IGYK…GVTL), and 1826 to 1864 (AIHK…AMPL). The FAT domain maps to 2610–3173 (LLAYLGKSHN…YFPIRTLYLT (564 aa)). Positions 3429–3753 (MPRVEIVQKN…AVDIIMTRFN (325 aa)) constitute a PI3K/PI4K catalytic domain. A G-loop region spans residues 3435-3441 (VQKNNTA). Residues 3616 to 3624 (NLTRLNADM) form a catalytic loop region. The tract at residues 3636-3661 (ISYFKFDVNDDKCQLNQHRPVPFRLT) is activation loop. An FATC domain is found at 3758–3790 (FDSIENKKISVLVQSATNIDNLCRMDPAWHPWL).

Belongs to the PI3/PI4-kinase family. TRA1 subfamily. As to quaternary structure, component of the Tip60 chromatin-remodeling complex which contains the catalytic subunit Tip60 and the subunits Domino, Tra1, Brd8, E(Pc), DMAP1, Pontin, Reptin, Ing3, Act87E, BAP55, Mrg15, MrgBP, Gas41 and YL-1. Probable component of some SAGA complex. Interacts with Spt3, Gcn5, Ada3 and Ada2b. Ubiquitous.

Its subcellular location is the nucleus. It localises to the cytoplasm. The protein resides in the chromosome. Its function is as follows. Part of the Tip60 chromatin-remodeling complex which is involved in DNA repair. Upon induction of DNA double-strand breaks, this complex acetylates phosphorylated H2AV in nucleosomes and exchanges it with unmodified H2AV. During wing development, required for activity of Notch and its coactivator mam. Function in promoting mam function is likely to involve both the Tip60 and SAGA complexes. This is Transcription-associated protein 1 (Nipped-A) from Drosophila melanogaster (Fruit fly).